A 67-amino-acid chain; its full sequence is Protein AaeX (67 aa).

The next 2 helical transmembrane spans lie at 3 to 23 (LFPV…KLLL) and 43 to 63 (FVWH…YLIS).

This sequence belongs to the AaeX family.

It localises to the cell membrane. This chain is Protein AaeX, found in Salmonella gallinarum (strain 287/91 / NCTC 13346).